We begin with the raw amino-acid sequence, 315 residues long: Probable cell division protein WhiA (315 aa).

The segment at residues Ser277 to Gln311 is a DNA-binding region (H-T-H motif).

It belongs to the WhiA family.

Its function is as follows. Involved in cell division and chromosome segregation. The polypeptide is Probable cell division protein WhiA (Lacticaseibacillus casei (strain BL23) (Lactobacillus casei)).